The following is a 184-amino-acid chain: ATP synthase subunit b, chloroplastic (184 aa).

Residues 27–49 (FATNPINLSVVLGVLIFFGKGVL) traverse the membrane as a helical segment.

Belongs to the ATPase B chain family. F-type ATPases have 2 components, F(1) - the catalytic core - and F(0) - the membrane proton channel. F(1) has five subunits: alpha(3), beta(3), gamma(1), delta(1), epsilon(1). F(0) has four main subunits: a(1), b(1), b'(1) and c(10-14). The alpha and beta chains form an alternating ring which encloses part of the gamma chain. F(1) is attached to F(0) by a central stalk formed by the gamma and epsilon chains, while a peripheral stalk is formed by the delta, b and b' chains.

Its subcellular location is the plastid. The protein resides in the chloroplast thylakoid membrane. In terms of biological role, f(1)F(0) ATP synthase produces ATP from ADP in the presence of a proton or sodium gradient. F-type ATPases consist of two structural domains, F(1) containing the extramembraneous catalytic core and F(0) containing the membrane proton channel, linked together by a central stalk and a peripheral stalk. During catalysis, ATP synthesis in the catalytic domain of F(1) is coupled via a rotary mechanism of the central stalk subunits to proton translocation. Its function is as follows. Component of the F(0) channel, it forms part of the peripheral stalk, linking F(1) to F(0). In Ipomoea purpurea (Common morning glory), this protein is ATP synthase subunit b, chloroplastic.